The sequence spans 968 residues: RNA polymerase-associated protein RapA (968 aa).

Residues 164–334 (EVGQRHAPRV…FARLRLLDPN (171 aa)) enclose the Helicase ATP-binding domain. An ATP-binding site is contributed by 177-184 (DEVGLGKT). Positions 280 to 283 (DEAH) match the DEAH box motif. Positions 490 to 664 (RVEWLLNYLV…AAPTEQEGLD (175 aa)) constitute a Helicase C-terminal domain.

This sequence belongs to the SNF2/RAD54 helicase family. RapA subfamily. Interacts with the RNAP. Has a higher affinity for the core RNAP than for the holoenzyme. Its ATPase activity is stimulated by binding to RNAP.

Transcription regulator that activates transcription by stimulating RNA polymerase (RNAP) recycling in case of stress conditions such as supercoiled DNA or high salt concentrations. Probably acts by releasing the RNAP, when it is trapped or immobilized on tightly supercoiled DNA. Does not activate transcription on linear DNA. Probably not involved in DNA repair. This is RNA polymerase-associated protein RapA from Serratia proteamaculans (strain 568).